Here is a 131-residue protein sequence, read N- to C-terminus: ALADTALRQCLPCGPGNRGRCFGPGICCGVELGGCYVGTAETRRCAEEDYLPSPCQPGGQPCGSGGRCAADGVCCSADTCAADASCLEEGSERAEEAAEKNLTVLDGSAGDLLLRLMQLAGRQQGRQPGLL.

Intrachain disulfides connect Cys-10–Cys-55, Cys-13–Cys-27, Cys-21–Cys-45, Cys-28–Cys-35, Cys-62–Cys-74, Cys-68–Cys-86, and Cys-75–Cys-80.

Belongs to the vasopressin/oxytocin family.

It localises to the secreted. In terms of biological role, neurophysin 2 specifically binds vasopressin. The protein is Neurophysin 2 of Anser anser anser (Western greylag goose).